A 139-amino-acid polypeptide reads, in one-letter code: Protein GOS9 (139 aa).

The Jacalin-type lectin domain occupies 5–139 (LVKIGTWGGN…VDSIGVYVHI (135 aa)).

In terms of tissue distribution, expressed mainly in roots.

The chain is Protein GOS9 (GOS9) from Oryza sativa subsp. indica (Rice).